Consider the following 452-residue polypeptide: NADH-quinone oxidoreductase subunit N 2 (452 aa).

14 consecutive transmembrane segments (helical) span residues 6–26 (VLIPEISLLILAIISFFYGFI), 33–53 (TYILSFLSILTAIILSVFNFG), 70–90 (TLRILVLFIGVFIIGLSYSDL), 97–117 (SVEYVFLLLLSLFGMNLMIVA), 120–140 (LLILYLALETFSLSLYILAGF), 154–174 (YFILGTLSSIILLGSIVFFYA), 194–214 (ILLGVVFLISAFAFKLSLAPF), 232–252 (FLSTAPKVAVFGALINIFLSI), 258–278 (IQDLIVIISALSMLVGNVLAL), 286–306 (MLAYSSIAHAGYMFMAFLLPE), 311–331 (ISLIPYLIVYVFMNLSAFAFI), 355–375 (FCIIVIMFSLTGVPPTAGFIV), 387–407 (GYGSLVFFALLMSIFSAFYYL), and 432–452 (ALSGALLLIFLGLFPNLLLIF).

The protein belongs to the complex I subunit 2 family. In terms of assembly, NDH-1 is composed of 14 different subunits. Subunits NuoA, H, J, K, L, M, N constitute the membrane sector of the complex.

The protein resides in the cell inner membrane. The catalysed reaction is a quinone + NADH + 5 H(+)(in) = a quinol + NAD(+) + 4 H(+)(out). In terms of biological role, NDH-1 shuttles electrons from NADH, via FMN and iron-sulfur (Fe-S) centers, to quinones in the respiratory chain. The immediate electron acceptor for the enzyme in this species is believed to be ubiquinone. Couples the redox reaction to proton translocation (for every two electrons transferred, four hydrogen ions are translocated across the cytoplasmic membrane), and thus conserves the redox energy in a proton gradient. This is NADH-quinone oxidoreductase subunit N 2 from Thermodesulfovibrio yellowstonii (strain ATCC 51303 / DSM 11347 / YP87).